The chain runs to 246 residues: Deoxycytidylate 5-hydroxymethyltransferase (246 aa).

Cys-148 is a catalytic residue.

Belongs to the thymidylate synthase family.

It carries out the reaction dCMP + (6R)-5,10-methylene-5,6,7,8-tetrahydrofolate + H2O = 5-hydroxymethyl-dCMP + (6S)-5,6,7,8-tetrahydrofolate. This chain is Deoxycytidylate 5-hydroxymethyltransferase (42), found in Escherichia coli (Bacteriophage T2).